A 112-amino-acid chain; its full sequence is Integration host factor subunit alpha (112 aa).

Belongs to the bacterial histone-like protein family. Heterodimer of an alpha and a beta chain.

Functionally, this protein is one of the two subunits of integration host factor, a specific DNA-binding protein that functions in genetic recombination as well as in transcriptional and translational control. This is Integration host factor subunit alpha from Rhizobium rhizogenes (strain K84 / ATCC BAA-868) (Agrobacterium radiobacter).